We begin with the raw amino-acid sequence, 1018 residues long: Cell wall protein 1 (1018 aa).

A signal peptide spans 1–17; that stretch reads MLPSIVISIVLASFVSA. The CFEM 1 domain occupies 32–143; the sequence is NPYTIYPSVA…SSLSAAATAV (112 aa). Disulfide bonds link cysteine 60–cysteine 100, cysteine 64–cysteine 95, cysteine 74–cysteine 81, and cysteine 83–cysteine 116. Aspartate 78 lines the heme pocket. Residues 147 to 227 are disordered; it reads SEQPVETSSE…STPEDNPYTI (81 aa). The span at 148-164 shows a compositional bias: polar residues; sequence EQPVETSSEPAGSSQSV. Over residues 165-221 the composition is skewed to low complexity; sequence ESSQPAETSSSEPAETSSSEPAETSSETSSEQPASSEPAETSSEESSTITSAPSTPE. 2 consecutive CFEM domains span residues 223 to 334 and 393 to 504; these read NPYT…ATAV and SSSS…ATAV. 4 disulfides stabilise this stretch: cysteine 251/cysteine 291, cysteine 255/cysteine 286, cysteine 265/cysteine 272, and cysteine 274/cysteine 307. Aspartate 269 provides a ligand contact to heme. The segment at 338-396 is disordered; sequence SEQSVETSSESAESSQSVESSQPAETSSEQPSETSSETSSQQLSSITSAPDSSATSSSS. 4 disulfides stabilise this stretch: cysteine 421–cysteine 461, cysteine 425–cysteine 456, cysteine 435–cysteine 442, and cysteine 444–cysteine 477. Aspartate 439 is a binding site for heme. The disordered stretch occupies residues 507–557; that stretch reads SDSASETASQEPSETSSEQPSETASQQPAETSSEESSTITSAPSTPEDNPY. Residues 509–553 show a composition bias toward low complexity; sequence SASETASQEPSETSSEQPSETASQQPAETSSEESSTITSAPSTPE. One can recognise a CFEM 4 domain in the interval 555-666; the sequence is NPYTIYPSVA…SSLNAAATAV (112 aa). 4 disulfides stabilise this stretch: cysteine 583/cysteine 623, cysteine 587/cysteine 618, cysteine 597/cysteine 604, and cysteine 606/cysteine 639. Aspartate 601 serves as a coordination point for heme. The interval 677 to 785 is disordered; the sequence is SASESASQVP…STSTKSDAAS (109 aa). Residues 690-766 show a composition bias toward low complexity; the sequence is SAASSQSANN…AISESVAPSS (77 aa). Asparagine 698, asparagine 708, asparagine 718, asparagine 729, asparagine 743, asparagine 753, asparagine 769, asparagine 798, and asparagine 965 each carry an N-linked (GlcNAc...) asparagine glycan. Residues 767–785 are compositionally biased toward polar residues; sequence YGNSTIAQPSTSTKSDAAS. Serine 989 carries the GPI-anchor amidated serine lipid modification. The propeptide at 990–1018 is removed in mature form; the sequence is VAIANMANTKFASTMSLLVASFVFVGLFI.

It belongs to the RBT5 family. In terms of processing, the GPI-anchor is attached to the protein in the endoplasmic reticulum and serves to target the protein to the cell surface. There, the glucosamine-inositol phospholipid moiety is cleaved off and the GPI-modified mannoprotein is covalently attached via its lipidless GPI glycan remnant to the 1,6-beta-glucan of the outer cell wall layer.

The protein resides in the secreted. It localises to the cell wall. Its subcellular location is the membrane. In terms of biological role, heme-binding protein involved in heme-iron utilization. The ability to acquire iron from host tissues is a major virulence factor of pathogenic microorganisms. Required for biofilm formation. This is Cell wall protein 1 (CSA1) from Candida albicans (strain SC5314 / ATCC MYA-2876) (Yeast).